A 207-amino-acid chain; its full sequence is Large ribosomal subunit protein bL25 (207 aa).

The protein belongs to the bacterial ribosomal protein bL25 family. CTC subfamily. As to quaternary structure, part of the 50S ribosomal subunit; part of the 5S rRNA/L5/L18/L25 subcomplex. Contacts the 5S rRNA. Binds to the 5S rRNA independently of L5 and L18.

This is one of the proteins that binds to the 5S RNA in the ribosome where it forms part of the central protuberance. This is Large ribosomal subunit protein bL25 from Brucella canis (strain ATCC 23365 / NCTC 10854 / RM-666).